The chain runs to 57 residues: Large ribosomal subunit protein bL32c (57 aa).

The protein belongs to the bacterial ribosomal protein bL32 family.

The protein localises to the plastid. It is found in the chloroplast. The sequence is that of Large ribosomal subunit protein bL32c from Phalaenopsis aphrodite subsp. formosana (Moth orchid).